Reading from the N-terminus, the 405-residue chain is Putative colanic acid polymerase (405 aa).

A run of 11 helical transmembrane segments spans residues 5–25, 27–47, 55–75, 81–101, 117–137, 171–191, 204–224, 244–264, 282–302, 327–347, and 376–396; these read IRICSYLLLPLIYLLVNVKIA, LGESFPITIVTFLPVLLLLFL, LMIALGIGAGLTAFNYLFGQS, YVTSTMLFVYIVIIIGMVWSI, FFYLVVGLVVALAAVEMAQII, TALYFEPAFFALALISIWLSI, MILAGIILSGSFSGVMTFILF, PLALISLAVFLVGVVIAFPYI, IVGPLVMVGYSLTHIDGVVRF, GLYLLIIYFSWFAVFLSLWYM, and LFFTGSIFSPEYAFLIVCPFI.

The protein localises to the cell inner membrane. It participates in slime biogenesis; slime polysaccharide biosynthesis. This is Putative colanic acid polymerase (wcaD) from Escherichia coli (strain K12).